Consider the following 510-residue polypeptide: ATP synthase subunit alpha (510 aa).

170–177 (GDRQTGKT) contacts ATP.

This sequence belongs to the ATPase alpha/beta chains family. In terms of assembly, F-type ATPases have 2 components, CF(1) - the catalytic core - and CF(0) - the membrane proton channel. CF(1) has five subunits: alpha(3), beta(3), gamma(1), delta(1), epsilon(1). CF(0) has three main subunits: a(1), b(2) and c(9-12). The alpha and beta chains form an alternating ring which encloses part of the gamma chain. CF(1) is attached to CF(0) by a central stalk formed by the gamma and epsilon chains, while a peripheral stalk is formed by the delta and b chains.

The protein resides in the cell inner membrane. The enzyme catalyses ATP + H2O + 4 H(+)(in) = ADP + phosphate + 5 H(+)(out). In terms of biological role, produces ATP from ADP in the presence of a proton gradient across the membrane. The alpha chain is a regulatory subunit. In Maricaulis maris (strain MCS10) (Caulobacter maris), this protein is ATP synthase subunit alpha.